Consider the following 810-residue polypeptide: Valine--tRNA ligase (810 aa).

A 'HIGH' region motif is present at residues Pro-45–His-55. The 'KMSKS' region motif lies at Lys-534–Ser-538. Lys-537 provides a ligand contact to ATP.

It belongs to the class-I aminoacyl-tRNA synthetase family. ValS type 2 subfamily. In terms of assembly, monomer.

The protein localises to the cytoplasm. The catalysed reaction is tRNA(Val) + L-valine + ATP = L-valyl-tRNA(Val) + AMP + diphosphate. Functionally, catalyzes the attachment of valine to tRNA(Val). As ValRS can inadvertently accommodate and process structurally similar amino acids such as threonine, to avoid such errors, it has a 'posttransfer' editing activity that hydrolyzes mischarged Thr-tRNA(Val) in a tRNA-dependent manner. This is Valine--tRNA ligase from Ehrlichia ruminantium (strain Welgevonden).